The following is a 435-amino-acid chain: C4-dicarboxylate transport protein (435 aa).

The next 9 membrane-spanning stretches (helical) occupy residues 4–24 (SLFKSLYFQVLTAIAIGILLG), 44–64 (LIKMIIAPVIFCTVVTGIAGM), 76–96 (VALLYFEIVSTIALIIGLIIV), 142–162 (IGAFASGNILQVLLFAVLFGF), 184–204 (VIFGIINMIMRLAPIGAFGAM), 222–242 (LIICFYITCILFVVVVLGTIA), 289–309 (VVGLVIPTGYSFNLDGTSIYL), 326–346 (IFHQITLLVVLLLSSKGVAGV), and 352–372 (IVLAATISAVGHLPVAGLALI).

It belongs to the dicarboxylate/amino acid:cation symporter (DAACS) (TC 2.A.23) family.

It localises to the cell inner membrane. In terms of biological role, responsible for the transport of dicarboxylates such as succinate, fumarate, and malate from the periplasm across the membrane. This is C4-dicarboxylate transport protein from Salmonella paratyphi A (strain ATCC 9150 / SARB42).